A 598-amino-acid chain; its full sequence is Elongation factor 4 (598 aa).

Positions 3-185 (QHIRNFSIIA…MIVAQIPPPE (183 aa)) constitute a tr-type G domain. GTP contacts are provided by residues 15 to 20 (DHGKST) and 132 to 135 (NKID).

The protein belongs to the TRAFAC class translation factor GTPase superfamily. Classic translation factor GTPase family. LepA subfamily.

The protein resides in the cell inner membrane. The enzyme catalyses GTP + H2O = GDP + phosphate + H(+). Its function is as follows. Required for accurate and efficient protein synthesis under certain stress conditions. May act as a fidelity factor of the translation reaction, by catalyzing a one-codon backward translocation of tRNAs on improperly translocated ribosomes. Back-translocation proceeds from a post-translocation (POST) complex to a pre-translocation (PRE) complex, thus giving elongation factor G a second chance to translocate the tRNAs correctly. Binds to ribosomes in a GTP-dependent manner. The polypeptide is Elongation factor 4 (Nitrosomonas europaea (strain ATCC 19718 / CIP 103999 / KCTC 2705 / NBRC 14298)).